The chain runs to 380 residues: Outer membrane protein 40 (380 aa).

The first 21 residues, M1 to A21, serve as a signal peptide directing secretion. At Q22 the chain carries Pyrrolidone carboxylic acid. The OmpA-like domain occupies P270–E380.

This sequence belongs to the outer membrane OOP (TC 1.B.6) superfamily. In terms of assembly, disulfide-linked heterodimer with Omp41.

Its subcellular location is the cell outer membrane. Functionally, may have porin activity and function in peptidoglycan binding. This chain is Outer membrane protein 40, found in Porphyromonas gingivalis (strain ATCC BAA-308 / W83).